The chain runs to 307 residues: uncharacterized protein (307 aa).

2 stretches are compositionally biased toward basic and acidic residues: residues 42 to 52 (TCRSPGEDKCP) and 112 to 121 (QKKEEPEGSH). The segment at 42-153 (TCRSPGEDKC…VPPAVASASA (112 aa)) is disordered. Residues 129 to 139 (KQHKKAKKRKS) are compositionally biased toward basic residues.

This is an uncharacterized protein from Mus musculus (Mouse).